We begin with the raw amino-acid sequence, 338 residues long: D-erythrose-4-phosphate dehydrogenase (338 aa).

Residue 11-12 (RI) coordinates NAD(+). Substrate-binding positions include 153 to 155 (SCT), Arg199, 212 to 213 (TK), and Arg235. Residue Cys154 is the Nucleophile of the active site. Residue Asn317 participates in NAD(+) binding.

The protein belongs to the glyceraldehyde-3-phosphate dehydrogenase family. Epd subfamily. In terms of assembly, homotetramer.

The protein localises to the cytoplasm. The enzyme catalyses D-erythrose 4-phosphate + NAD(+) + H2O = 4-phospho-D-erythronate + NADH + 2 H(+). Its pathway is cofactor biosynthesis; pyridoxine 5'-phosphate biosynthesis; pyridoxine 5'-phosphate from D-erythrose 4-phosphate: step 1/5. Catalyzes the NAD-dependent conversion of D-erythrose 4-phosphate to 4-phosphoerythronate. This Shewanella oneidensis (strain ATCC 700550 / JCM 31522 / CIP 106686 / LMG 19005 / NCIMB 14063 / MR-1) protein is D-erythrose-4-phosphate dehydrogenase.